The sequence spans 278 residues: RsbT co-antagonist protein RsbRD (278 aa).

Positions 160 to 271 constitute an STAS domain; that stretch reads SAPIMPITDG…QSLAKALANK (112 aa). T181 carries the post-translational modification Phosphothreonine.

In terms of assembly, probably present in the stressosome with RsbRA, RsbRB, RsbRC and RsbS. In terms of processing, phosphorylated by RsbT.

One of 4 functionally non-identical RsbR paralogs, it functions in the environmental signaling branch of the general stress response. Functionally, negative regulator of sigma-B activity. Non-phosphorylated RsbS binds to RsbT, preventing its association with RsbU. Requires any one of RsbRA, RsbRB, RsbRC or RsbRD to sequester RsbT. When RsbS and the RsbR paralog(s) are phosphorylated, they release RsbT, which can then bind and activate RsbU. This Bacillus subtilis (strain 168) protein is RsbT co-antagonist protein RsbRD (rsbRD).